We begin with the raw amino-acid sequence, 66 residues long: UPF0337 protein BT9727_0908 (66 aa).

The segment at 1–22 (MSENGLKEQITGKVEKTKGQVK) is disordered. Over residues 13-22 (KVEKTKGQVK) the composition is skewed to basic and acidic residues.

The protein belongs to the UPF0337 (CsbD) family.

The polypeptide is UPF0337 protein BT9727_0908 (Bacillus thuringiensis subsp. konkukian (strain 97-27)).